A 418-amino-acid polypeptide reads, in one-letter code: Zinc metalloproteinase nas-8 (418 aa).

Residues 1–28 (MMNRASLCRIAVLLCILHLSHLIDSTYA) form the signal peptide. A propeptide spanning residues 29–100 (QSYLTEKDFL…TSKLKSGVRR (72 aa)) is cleaved from the precursor. Residues 101–296 (NGVTSVIKRW…LKINKLYNCP (196 aa)) form the Peptidase M12A domain. Disulfide bonds link cysteine 143–cysteine 295, cysteine 165–cysteine 184, cysteine 347–cysteine 381, cysteine 354–cysteine 374, and cysteine 361–cysteine 378. Zn(2+) is bound at residue histidine 192. Glutamate 193 is an active-site residue. Residues histidine 196 and histidine 202 each contribute to the Zn(2+) site. Residues 347 to 381 (CSDRTNLCWRWLDRCRSYFFEKIMKEFCALSCGYC) enclose the ShKT domain.

The cofactor is Zn(2+).

The protein resides in the secreted. The catalysed reaction is Hydrolysis of peptide bonds in substrates containing five or more amino acids, preferentially with Ala in P1', and Pro in P2'.. Its activity is regulated as follows. Inhibited by ethylene glycol-bis(2-aminoethylether)-N,N,N,N-tetraacetic acid (EGTA), ethylenediaminetetraacetic acid (EDTA) and o-phenanthroline. Metalloprotease. The sequence is that of Zinc metalloproteinase nas-8 from Steinernema carpocapsae (Entomopathogenic nematode).